Reading from the N-terminus, the 348-residue chain is Trace amine-associated receptor 9 (348 aa).

The Extracellular segment spans residues 1–33; it reads MVNNFSQAEAVELCYKNVNESCIKTPYSPGPRS. N-linked (GlcNAc...) asparagine glycosylation is found at N4 and N19. 2 cysteine pairs are disulfide-bonded: C22–C186 and C105–C190. A helical membrane pass occupies residues 34–58; it reads ILYAVLGFGAVLAAFGNLLVMIAIL. The Cytoplasmic segment spans residues 59–68; sequence HFKQLHTPTN. A helical membrane pass occupies residues 69–90; the sequence is FLIASLACADFLVGVTVMPFST. At 91–105 the chain is on the extracellular side; it reads VRSVESCWYFGDSYC. Residues 106–128 form a helical membrane-spanning segment; the sequence is KFHTCFDTSFCFASLFHLCCISV. Spermidine-binding residues include D112 and T113. The Cytoplasmic portion of the chain corresponds to 129 to 148; that stretch reads DRYIAVTDPLTYPTKFTVSV. A helical transmembrane segment spans residues 149-170; that stretch reads SGICIVLSWFFSVTYSFSIFYT. At 171–196 the chain is on the extracellular side; that stretch reads GANEEGIEELVVALTCVGGCQAPLNQ. The segment at 174–187 is extracellular Loop 2 (ECL2); it reads EEGIEELVVALTCV. The chain crosses the membrane as a helical span at residues 197–218; sequence NWVLLCFLLFFIPNVAMVFIYS. The Cytoplasmic portion of the chain corresponds to 219 to 256; it reads KIFLVAKHQARKIESTASQAQSSSESYKERVAKRERKA. Residues 257-280 traverse the membrane as a helical segment; it reads AKTLGIAMAAFLVSWLPYLVDAVI. Residues 281-293 are Extracellular-facing; that stretch reads DAYMNFITPPYVY. A helical membrane pass occupies residues 294–314; the sequence is EILVWCVYYNSAMNPLIYAFF. Residues 315-348 lie on the Cytoplasmic side of the membrane; the sequence is YQWFGKAIKLIVSGKVLRTDSSTTNLFSEEVETD.

Belongs to the G-protein coupled receptor 1 family.

The protein resides in the cell membrane. Olfactory receptor specific for trace amines, such as N,N-dimethylcyclohexylamine (DMCHA) and beta-phenylethylamine (beta-PEA). In contrast to mouse and rat orthologs, not activated by triethylamine, cadaverine (CAD) or spermidine. Trace amine compounds are enriched in animal body fluids and act on trace amine-associated receptors (TAARs) to elicit both intraspecific and interspecific innate behaviors. Trace amine-binding causes a conformation change that triggers signaling via G(s)-class of G alpha proteins (GNAL or GNAS). In mature olfactory sensory neurons, TAAR9 is coupled with GNAL/G(olf)G alpha protein and mediates activation of adenylate cyclase activity to activate cAMP signaling and eventually transmit odorant signals to achieve membrane depolarization. In immature olfactory sensory neurons, TAAR9 is coupled with GNAS/G(s) G alpha proteins. The protein is Trace amine-associated receptor 9 of Homo sapiens (Human).